We begin with the raw amino-acid sequence, 234 residues long: Uridylate kinase (234 aa).

Lys-9–Gly-12 lines the ATP pocket. A UMP-binding site is contributed by Gly-51. Gly-52 and Arg-56 together coordinate ATP. UMP-binding positions include Asp-71 and Cys-132–Thr-139. ATP is bound by residues Thr-159, Tyr-165, and Asp-168.

The protein belongs to the UMP kinase family. As to quaternary structure, homohexamer.

It localises to the cytoplasm. It catalyses the reaction UMP + ATP = UDP + ADP. The protein operates within pyrimidine metabolism; CTP biosynthesis via de novo pathway; UDP from UMP (UMPK route): step 1/1. Its activity is regulated as follows. Inhibited by UTP. Its function is as follows. Catalyzes the reversible phosphorylation of UMP to UDP. This Prochlorococcus marinus (strain MIT 9515) protein is Uridylate kinase.